A 669-amino-acid chain; its full sequence is Soluble guanylate cyclase 89Db (669 aa).

H104 provides a ligand contact to heme. A coiled-coil region spans residues 430–458 (QHCSKLEIMFEKEEQRSDELEKSLELADS). In terms of domain architecture, Guanylate cyclase spans 494-620 (SVIFIEVMNI…DTVNTASRME (127 aa)).

Belongs to the adenylyl cyclase class-4/guanylyl cyclase family. As to quaternary structure, heterodimer; with Gyc88E, in the presence of magnesium or manganese. Heme is required as a cofactor. As to expression, expressed in embryos in a segmental pattern in the ventral nerve cord (VNC) and in the brain, beginning at stage 13 and continuing through to stage 17. Colocalized with Gyc-89Db in several peripheral neurons that innervate trachea, basiconical sensilla and the sensory cones in the posterior segments of the embryo. Expression in wandering 3rd instar larvae is most prominent in a small cluster of cells located in the anterior medial region of each brain lobe. In the VNC, expression is found in scattered cells both laterally and at the midline.

The protein localises to the cytoplasm. It carries out the reaction GTP = 3',5'-cyclic GMP + diphosphate. Probably not activated by nitric oxide (NO). Heterodimer exhibits some stimulation, compounds (SIN-1 and two of the NONOates) that were ineffective at stimulating Gyc-88E homodimer did stimulate the heterodimer. Functionally, heterodimers with Gyc88E are activated in response to changing oxygen concentrations, alerting flies to hypoxic environments. Under normal oxygen concentrations, oxygen binds to the heme group and results in low levels of guanylyl cyclase activity. When exposed to reduced oxygen concentrations, the oxygen dissociates from the heme group resulting in activation of the enzyme. The chain is Soluble guanylate cyclase 89Db from Drosophila melanogaster (Fruit fly).